The following is a 263-amino-acid chain: HTH-type transcriptional repressor NanR (263 aa).

The tract at residues 1–24 is disordered; it reads MSPMNAFDSQTEDSSPAIGRNLRS. The HTH gntR-type domain occupies 30–98; that stretch reads KKLSEMVEEE…NGERARVSRP (69 aa). The H-T-H motif DNA-binding region spans 58–77; the sequence is ERELMAFFNVGRPSVREALA.

This sequence belongs to the NanR family.

Its function is as follows. Transcriptional repressor that controls expression of the genes required for the catabolism of sialic acids. The sequence is that of HTH-type transcriptional repressor NanR from Escherichia coli O127:H6 (strain E2348/69 / EPEC).